The primary structure comprises 248 residues: PF03932 family protein CutC (248 aa).

The protein belongs to the CutC family. In terms of assembly, homodimer.

It is found in the cytoplasm. This is PF03932 family protein CutC from Salmonella paratyphi A (strain AKU_12601).